The chain runs to 336 residues: Pyridoxal 5'-phosphate synthase subunit PdxS (336 aa).

Asp30 contacts D-ribose 5-phosphate. Residue Lys87 is the Schiff-base intermediate with D-ribose 5-phosphate of the active site. Gly159 contacts D-ribose 5-phosphate. Arg171 contributes to the D-glyceraldehyde 3-phosphate binding site. Residues Gly257 and 278–279 contribute to the D-ribose 5-phosphate site; that span reads GS.

This sequence belongs to the PdxS/SNZ family. In terms of assembly, in the presence of PdxT, forms a dodecamer of heterodimers.

It carries out the reaction aldehydo-D-ribose 5-phosphate + D-glyceraldehyde 3-phosphate + L-glutamine = pyridoxal 5'-phosphate + L-glutamate + phosphate + 3 H2O + H(+). It participates in cofactor biosynthesis; pyridoxal 5'-phosphate biosynthesis. Functionally, catalyzes the formation of pyridoxal 5'-phosphate from ribose 5-phosphate (RBP), glyceraldehyde 3-phosphate (G3P) and ammonia. The ammonia is provided by the PdxT subunit. Can also use ribulose 5-phosphate and dihydroxyacetone phosphate as substrates, resulting from enzyme-catalyzed isomerization of RBP and G3P, respectively. This is Pyridoxal 5'-phosphate synthase subunit PdxS from Thermoplasma acidophilum (strain ATCC 25905 / DSM 1728 / JCM 9062 / NBRC 15155 / AMRC-C165).